A 654-amino-acid chain; its full sequence is Neuroendocrine convertase 2 (654 aa).

The signal sequence occupies residues methionine 1–alanine 21. Positions glycine 22–lysine 121 are excised as a propeptide. Residues glutamine 158–valine 483 form the Peptidase S8 domain. N-linked (GlcNAc...) asparagine glycosylation is present at asparagine 189. Catalysis depends on charge relay system residues aspartate 196 and histidine 237. Cystine bridges form between cysteine 254–cysteine 404 and cysteine 346–cysteine 376. An N-linked (GlcNAc...) asparagine glycan is attached at asparagine 312. Serine 412 acts as the Charge relay system in catalysis. In terms of domain architecture, P/Homo B spans serine 491–alanine 627. Cysteine 498 and cysteine 524 form a disulfide bridge. Asparagine 544 is a glycosylation site (N-linked (GlcNAc...) asparagine).

It belongs to the peptidase S8 family. Furin subfamily. In terms of tissue distribution, expressed in the central nervous system (CNS) and midgut endocrine cells of third instar larva (at protein level). In the CNS, expressed in the CA-LP1 and CA-LP2 neurons which innervate the corpus allatum, and in the CC-MS2 neurons which innervate the corpora cardiaca of the ring gland. Also expressed in the CC-MS1, SP3, Tv and Va neurons. Expressed in Akh-producing cells of the corpora cardiaca. In the embryo, restricted to the final stages of embryogenesis where expression is found in anterior sensory structures and in only 168 cells in the brain and ventral nerve cord. After larvae hatch, the sensory structures and most cells in the CNS turn off or substantially reduce expression. In third instar larva, expressed at higher levels in the anterior section than in the posterior section. Little expression is detected in the adult head. In the developing eye, expressed at higher levels in pale-type R7 photoreceptor cells than in yellow-type R7 cells although expression is not seen in all pale-type R7 cells. Also expressed in outer photoreceptor cells.

Its subcellular location is the secreted. It carries out the reaction Release of protein hormones and neuropeptides from their precursors, generally by hydrolysis of -Lys-Arg-|- bonds.. In terms of biological role, serine endopeptidase which is involved in the processing of hormone and other protein precursors at sites comprised of pairs of basic amino acid residues. Required during embryonic and larval development, probably by proteolytically processing peptide hormones involved in hatching, larval growth and larval molting. Required for the processing and activation of Akh which maintains normal hemolymph sugar levels. Has been shown in one study to be required for processing of sli into slit N-product and slit C-product in the embryo which is necessary for lateral transverse muscle elongation but has been shown in another study not to be required for sli cleavage. Required for larval hatching. Also required for normal larval wandering behavior which occurs prior to pupariation. Required during pupal development for head eversion, leg and wing disk extension, and abdominal differentiation. Required during eye development for R8 photoreceptor cell specification by regulating processing of ligands required for the BMP and activin signaling pathways. This is Neuroendocrine convertase 2 from Drosophila melanogaster (Fruit fly).